The primary structure comprises 359 residues: Mannonate dehydratase (359 aa).

The protein belongs to the mannonate dehydratase family. Requires Fe(2+) as cofactor. The cofactor is Mn(2+).

It carries out the reaction D-mannonate = 2-dehydro-3-deoxy-D-gluconate + H2O. It functions in the pathway carbohydrate metabolism; pentose and glucuronate interconversion. Its function is as follows. Catalyzes the dehydration of D-mannonate. The protein is Mannonate dehydratase of Moorella thermoacetica (strain ATCC 39073 / JCM 9320).